We begin with the raw amino-acid sequence, 372 residues long: Flagellar P-ring protein (372 aa).

Positions 1-29 are cleaved as a signal peptide; the sequence is MPARPIPVPAFALALALAAALAVPAPAAA.

This sequence belongs to the FlgI family. The basal body constitutes a major portion of the flagellar organelle and consists of four rings (L,P,S, and M) mounted on a central rod.

The protein resides in the periplasm. It is found in the bacterial flagellum basal body. Its function is as follows. Assembles around the rod to form the L-ring and probably protects the motor/basal body from shearing forces during rotation. This is Flagellar P-ring protein from Anaeromyxobacter dehalogenans (strain 2CP-1 / ATCC BAA-258).